Here is a 664-residue protein sequence, read N- to C-terminus: MTAQSNITPESIVGDLRYLQLLSRSFPTIADASTEIINLEAILNLPKGTEHFLTDIHGEYEAFQHVLKNASGAVKRKVNEIFGNTLREAEKKELCTLIYYPEEKIQLVKAREKDLDDWYLITLNQLVKVCQNVSSKYTRSKVRKSLPAEFSYIIQELLHETSVEPNKHAYINVIISTIISTKRADDFIIAMCNLIQRLTIDSLHIVGDIYDRGPGAHIIMDTLCNYHNFDIQWGNHDILWMGAASGNDSCIANVIRMSMRYGNLGTLEDGYGINLLPLATFAMDTYADDPCTIFMPKMNFADTNYNEKTLRLITQMHKAITIIQFKLEAEIIDRRPEFGMSNRKLLEKIDFERGVFVYEGKEYALRDTNFPTVDPADPYRLTDEERELVEKIHYSFMNSEKLKKHMRCLFTYGGMYLVSNSNLLYHASVPLNEDGSFKHVKIRGKEYWGRKLLDKADQLIRTAYFDEEGEDDKEFAMDYIWYMWCGPEAPLFDKDKMATFERYFLEDKEIQKEKKGYYYTLRNREDICDQILDEFGALGPHSHIINGHVPVKTIQGEQPMKANGKLFVIDGGFSKAYQPETGIAGYTLVYHSHGMQLVQHEPFQSRQKAIEEGLDIKSTNFVLEFNSQRMMVKDTDKGKELVTQIQDLKKLLVAYRIGLIKEKV.

The protein belongs to the FBPase class 3 family. Mn(2+) is required as a cofactor.

It catalyses the reaction beta-D-fructose 1,6-bisphosphate + H2O = beta-D-fructose 6-phosphate + phosphate. It participates in carbohydrate biosynthesis; gluconeogenesis. This chain is Fructose-1,6-bisphosphatase class 3, found in Bacteroides thetaiotaomicron (strain ATCC 29148 / DSM 2079 / JCM 5827 / CCUG 10774 / NCTC 10582 / VPI-5482 / E50).